A 364-amino-acid chain; its full sequence is DNA replication and repair protein RecF (364 aa).

Position 30 to 37 (30 to 37 (GNNGQGKT)) interacts with ATP.

It belongs to the RecF family.

Its subcellular location is the cytoplasm. In terms of biological role, the RecF protein is involved in DNA metabolism; it is required for DNA replication and normal SOS inducibility. RecF binds preferentially to single-stranded, linear DNA. It also seems to bind ATP. This chain is DNA replication and repair protein RecF, found in Geobacter sp. (strain M21).